Here is a 202-residue protein sequence, read N- to C-terminus: Nigerythrin (202 aa).

The region spanning 23 to 168 (KTAVGSTLEN…AYNDIDAPDD (146 aa)) is the Ferritin-like diiron domain. Positions 40, 73, 115, 118, 149, 152, 174, 177, 189, and 192 each coordinate Fe cation. The Rubredoxin-like domain occupies 169 to 202 (DKFHLCPICGYIHKGEDFEKCPICFRPKDTFTAY).

Homodimer. May possess two rubredoxin-like centers and two hemerythrin-like binuclear-iron centers per dimer.

It is found in the cytoplasm. In terms of biological role, exhibits NADH peroxidase activity (in vitro). In Nitratidesulfovibrio vulgaris (strain ATCC 29579 / DSM 644 / CCUG 34227 / NCIMB 8303 / VKM B-1760 / Hildenborough) (Desulfovibrio vulgaris), this protein is Nigerythrin (ngr).